The chain runs to 288 residues: Protein FANTASTIC FOUR 3 (288 aa).

Residues His48–Ala60 are compositionally biased toward basic and acidic residues. Disordered stretches follow at residues His48–Gln100, Glu146–Thr172, and Asn222–Val261. A compositionally biased stretch (low complexity) spans Ser66–Ser90. An FAF domain is found at Asp165–Ile217. Residues Glu223–Met256 show a composition bias toward acidic residues.

This sequence belongs to the fantastic four family. In terms of tissue distribution, expressed in the shoot apex, stamens, young leaves and young siliques, but not in old leaves. Detected in provascular and vascular tissue, but not in the vegetative meristem. In inflorescences, restricted to the vasculature and absent from young flowers, except from anthers.

Its function is as follows. Able to repress WUS when constitutively overexpressed, but have no effect on CLV3. The protein is Protein FANTASTIC FOUR 3 (FAF3) of Arabidopsis thaliana (Mouse-ear cress).